The following is an 87-amino-acid chain: MNSLLMITACLVLIGTVWAKKDGYLVDKTGCKKTCYKLGENDFCNRECKWKHIGGSYGYCYGFGCYCEGMSDSTPTWPLPNKRCGKK.

The N-terminal stretch at 1–19 (MNSLLMITACLVLIGTVWA) is a signal peptide. Positions 20-85 (KKDGYLVDKT…TWPLPNKRCG (66 aa)) constitute an LCN-type CS-alpha/beta domain. 4 disulfide bridges follow: cysteine 31/cysteine 84, cysteine 35/cysteine 60, cysteine 44/cysteine 65, and cysteine 48/cysteine 67. Cysteine amide is present on cysteine 84.

The protein belongs to the long (4 C-C) scorpion toxin superfamily. Sodium channel inhibitor family. Beta subfamily. As to expression, expressed by the venom gland.

It is found in the secreted. Its function is as follows. Beta toxins bind voltage-independently at site-4 of sodium channels (Nav) and shift the voltage of activation toward more negative potentials thereby affecting sodium channel activation and promoting spontaneous and repetitive firing. Is possibly lethal to mice, freshwater shrimp and crickets. The protein is Beta-toxin Ct17 of Centruroides tecomanus (Scorpion).